Here is a 293-residue protein sequence, read N- to C-terminus: Cytochrome c biogenesis protein CcsA (293 aa).

Helical transmembrane passes span 12–32 (INILAFLGALVSSLFYWAKLT), 39–59 (VFSLPKFCLIFSNCIIAGMLL), 78–98 (LFLSWVLNIITIIFVDKLSII), 99–119 (GAIGSSAVTLIIGYANYILPP), 142–162 (VMIFSYGLLIMGAFLSLIYVI), 216–236 (FISLGFISLTLGIISGSVWAN), 250–267 (TWALITWLVFATYLHIRI), and 273–293 (KIYASLVASLGLIVICFVTWE).

Belongs to the CcmF/CycK/Ccl1/NrfE/CcsA family. May interact with Ccs1.

It is found in the plastid. The protein resides in the chloroplast thylakoid membrane. In terms of biological role, required during biogenesis of c-type cytochromes (cytochrome c6 and cytochrome f) at the step of heme attachment. This chain is Cytochrome c biogenesis protein CcsA, found in Cyanidium caldarium (Red alga).